The primary structure comprises 2548 residues: Unconventional myosin-IXa (2548 aa).

In terms of domain architecture, Ras-associating spans 14-112 (NEHTLRIYPG…YRFLLREKNL (99 aa)). A Myosin motor domain is found at 146–1016 (KDFDDLCSLP…ERQHLQDLLH (871 aa)). Residues 175 to 195 (IYTYVGSILIVINPFKFLPIY) form a helical membrane-spanning segment. Position 239–246 (239–246 (GESGSGKT)) interacts with ATP. Position 755 is a phosphoserine (S755). Positions 898–920 (LSKLMETLGQAEPYFVKCIRSNA) are actin-binding. IQ domains follow at residues 1021–1041 (RRII…HFLH), 1042–1071 (LRQA…QKDA), 1074–1103 (MASA…AAIV), 1115–1144 (RHMA…KIIL), and 1138–1167 (QRKK…QRLR). The tract at residues 1021-1162 (RRIILLQRWF…RARQRFKALK (142 aa)) is neck or regulatory domain. The interval 1163–2511 (EQRLRETKPE…LKNVKNSPQK (1349 aa)) is tail. Residues 1223–1236 (SVDCLKESPNKQQE) are compositionally biased toward basic and acidic residues. Positions 1223-1250 (SVDCLKESPNKQQERAQSQSGVDLQEDV) are disordered. S1242 and S1258 each carry phosphoserine. Residues 1264–1291 (QKKVGRAKRESRRMRELEQAIFSLELLK) are a coiled coil. Phosphoserine is present on residues S1299 and S1317. Residues 1299-1386 (SPSEDRRWST…SNETSSAEHL (88 aa)) form a disordered region. 2 stretches are compositionally biased toward low complexity: residues 1324–1337 (SESS…LSYE) and 1356–1366 (FPSPKISSSPK). A Phosphoserine modification is found at S1364. Residues 1372–1381 (NALSASNETS) show a composition bias toward polar residues. Positions 1486–1532 (VLKKLEKLNTEKEERQKQLQQQNEKEMMEQIRQQTDILEKERKAFKT) form a coiled coil. Residues 1804–1836 (YHPTPPLSPELPGSCRKEFKENKEPSPKAKRKR) are disordered. The segment covering 1818–1830 (CRKEFKENKEPSP) has biased composition (basic and acidic residues). S1948 carries the phosphoserine modification. Phorbol-ester/DAG-type zinc fingers lie at residues 1999–2048 (GHIF…TAKC) and 2068–2119 (LTSE…DAES). The region spanning 2063–2251 (VELSRLTSED…LIVVEQMNKY (189 aa)) is the Rho-GAP domain. Position 2294 is a phosphoserine (S2294). Residues 2315-2358 (AAMETDITEQQQAAMQQEERVLTEQIENLQKEKEELTFEMLVLE) adopt a coiled-coil conformation. Disordered regions lie at residues 2359–2383 (PRAS…ENLN) and 2401–2424 (SSLK…KQQD). A Phosphoserine modification is found at S2464. The tract at residues 2490 to 2531 (RGTFNPEKGKQKLKNVKNSPQKTKETPEGTVMSGRRKTVDPD) is disordered.

The protein belongs to the TRAFAC class myosin-kinesin ATPase superfamily. Myosin family. Post-translationally, phosphorylated by ALPK1 following monosodium urate monohydrate (MSU)-induced inflammation. In terms of tissue distribution, found to be expressed in testis and placenta and at lower levels in all the examined tissues with the exception of liver. Isoform 5: Found in leukocytes but not in brain, retina or testis.

The protein localises to the membrane. The protein resides in the cytoplasm. It is found in the synapse. Its subcellular location is the cell projection. It localises to the growth cone. In terms of biological role, myosins are actin-based motor molecules with ATPase activity. Unconventional myosins serve in intracellular movements. Regulates Rho by stimulating it's GTPase activity in neurons. Required for the regulation of neurite branching and motor neuron axon guidance. The polypeptide is Unconventional myosin-IXa (MYO9A) (Homo sapiens (Human)).